The following is a 228-amino-acid chain: Triosephosphate isomerase (228 aa).

11–13 lines the substrate pocket; the sequence is NFK. His-95 (electrophile) is an active-site residue. The active-site Proton acceptor is the Glu-143. Residues Ile-148, Gly-183, and 204-205 contribute to the substrate site; that span reads AS.

Belongs to the triosephosphate isomerase family. As to quaternary structure, homotetramer; dimer of dimers.

The protein resides in the cytoplasm. The catalysed reaction is D-glyceraldehyde 3-phosphate = dihydroxyacetone phosphate. The protein operates within carbohydrate biosynthesis; gluconeogenesis. It participates in carbohydrate degradation; glycolysis; D-glyceraldehyde 3-phosphate from glycerone phosphate: step 1/1. Its function is as follows. Involved in the gluconeogenesis. Catalyzes stereospecifically the conversion of dihydroxyacetone phosphate (DHAP) to D-glyceraldehyde-3-phosphate (G3P). In Pyrococcus horikoshii (strain ATCC 700860 / DSM 12428 / JCM 9974 / NBRC 100139 / OT-3), this protein is Triosephosphate isomerase.